The primary structure comprises 311 residues: Natural killer cell receptor 2B4 (311 aa).

The signal sequence occupies residues methionine 1–glycine 19. Residues glutamine 20 to tyrosine 223 are Extracellular-facing. Cysteine 22 and cysteine 118 are oxidised to a cystine. Ig-like domains are found at residues cysteine 22 to aspartate 128 and glutamate 131 to glutamine 215. Asparagine 101, asparagine 144, asparagine 160, asparagine 183, asparagine 196, and asparagine 205 each carry an N-linked (GlcNAc...) asparagine glycan. Residues cysteine 153 and cysteine 195 are joined by a disulfide bond. Residues leucine 224–tryptophan 247 traverse the membrane as a helical segment. The Cytoplasmic segment spans residues asparagine 248 to serine 311. Residues arginine 275–aspartate 301 form a disordered region. The segment covering valine 290–aspartate 301 has biased composition (basic and acidic residues).

Interacts with CD48. Interacts (via phosphorylated ITSM 1-4) with SH2D1A (via SH2 domain); SH2D1A probably mediates association with FYN. Interacts (via phosphorylated ITSM 3) with PTPN11/SHP-2, INPP5D/SHIP1, PTPN6/SHP-1 and CSK; binding of SH2D1A/SAP prevents association with PTPN11, PTPN6 and CSK; conflictingly a similar association has been described for phosphorylated ITSM 1 also including GRB2 and PLCG1. Interacts weakly (via phosphorylated ITSM 2) with PTPN11/SHP-2 and CSK. Interacts with SH2D1B. Interacts with PIK3R1; PI3K recruits SH2D1A. Interacts with MHC class I proteins; the interaction is proposed to prevent self-killing of NK cells. N-linked glycosylation is essential for the binding to its ligand CD48. Also O-glycosylated, in contrast, O-linked sialylation has a negative impact on ligand binding. In terms of processing, phosphorylated by FYN and CSK on tyrosine residues following activation. Coligation with inhibitory receptors such as KIR2DL1 inhibits phosphorylation upon contact of NK cells with sensitive target cells.

The protein localises to the membrane. It is found in the cell membrane. The protein resides in the membrane raft. Heterophilic receptor of the signaling lymphocytic activation molecule (SLAM) family; its ligand is CD48. SLAM receptors triggered by homo- or heterotypic cell-cell interactions are modulating the activation and differentiation of a wide variety of immune cells and thus are involved in the regulation and interconnection of both innate and adaptive immune response. Activities are controlled by presence or absence of small cytoplasmic adapter proteins, SH2D1A/SAP and/or SH2D1B/EAT-2. Acts as activating natural killer (NK) cell receptor. Activating function implicates association with SH2D1A and FYN. Downstreaming signaling involves predominantly VAV1, and, to a lesser degree, INPP5D/SHIP1 and CBL. Signal attenuation in the absence of SH2D1A is proposed to be dependent on INPP5D and to a lesser extent PTPN6/SHP-1 and PTPN11/SHP-2. Stimulates NK cell cytotoxicity, production of IFN-gamma and granule exocytosis. Optimal expansion and activation of NK cells seems to be dependent on the engagement of CD244 with CD48 expressed on neighboring NK cells. Acts as costimulator in NK activation by enhancing signals by other NK receptors such as NCR3 and NCR1. At early stages of NK cell differentiation may function as an inhibitory receptor possibly ensuring the self-tolerance of developing NK cells. Involved in the regulation of CD8(+) T-cell proliferation; expression on activated T-cells and binding to CD48 provides costimulatory-like function for neighboring T-cells. Inhibits inflammatory responses in dendritic cells (DCs). This chain is Natural killer cell receptor 2B4 (Cd244), found in Rattus norvegicus (Rat).